The sequence spans 640 residues: Chaperone protein DnaK (640 aa).

Residue T199 is modified to Phosphothreonine; by autocatalysis. Residues 603–640 (YTQQAEEPQPQKEEGKAAEEDVVDAEFEEVKEDKNKAS) form a disordered region. Residues 611-621 (QPQKEEGKAAE) show a composition bias toward basic and acidic residues. A compositionally biased stretch (acidic residues) spans 622-632 (EDVVDAEFEEV).

The protein belongs to the heat shock protein 70 family.

Its function is as follows. Acts as a chaperone. This chain is Chaperone protein DnaK, found in Nitrosococcus oceani (strain ATCC 19707 / BCRC 17464 / JCM 30415 / NCIMB 11848 / C-107).